A 409-amino-acid chain; its full sequence is Formyl-CoA:oxalate CoA-transferase (409 aa).

Residues 17–18 (QS), 71–74 (LNTK), 95–97 (NFG), R103, and 135–138 (KAYE) each bind CoA. D167 serves as the catalytic Nucleophile. Residues 221–245 (LAEYPNDDFGDEVPRSGNASGGGQP) form a disordered region. 242–244 (GGQ) is a substrate binding site.

Belongs to the CoA-transferase III family. Frc subfamily. Homodimer.

It carries out the reaction formyl-CoA + oxalate = oxalyl-CoA + formate. Its pathway is metabolic intermediate degradation; oxalate degradation; CO(2) and formate from oxalate: step 1/2. Functionally, involved in the catabolism of oxalate and in the adapatation to low pH via the induction of the oxalate-dependent acid tolerance response (ATR). Catalyzes the transfer of the CoA moiety from formyl-CoA to oxalate. The chain is Formyl-CoA:oxalate CoA-transferase from Streptomyces avermitilis (strain ATCC 31267 / DSM 46492 / JCM 5070 / NBRC 14893 / NCIMB 12804 / NRRL 8165 / MA-4680).